A 185-amino-acid chain; its full sequence is 4-nitrophenol 4-monooxygenase/4-nitrocatechol 2-monooxygenase, reductase component (185 aa).

Belongs to the non-flavoprotein flavin reductase family. The 4-NP/4-NCA monooxygenase is composed of an oxygenase component NpcA and a reductase component NpcB.

It catalyses the reaction 4-nitrophenol + NADH + O2 + H(+) = 4-nitrocatechol + NAD(+) + H2O. The catalysed reaction is 4-nitrocatechol + NADPH + O2 = 2-hydroxy-1,4-benzoquinone + nitrite + NADP(+) + H2O. It carries out the reaction 4-nitrocatechol + NADH + O2 = 2-hydroxy-1,4-benzoquinone + nitrite + NAD(+) + H2O. Its pathway is aromatic compound metabolism. It functions in the pathway xenobiotic degradation. With respect to regulation, inhibited by methimazole. Involved in the degradation of para-nitrophenol (4-NP). Catalyzes both the initial hydroxylation of 4-NP to produce 4-nitrocatechol (4-NCA) and the subsequent oxidative release of the nitro group from 4-NCA to produce 2-hydroxy-1,4-benzoquinone. It can also use 4-nitroresorcinol as substrate with a rate of nitrite release similar to that observed with the two physiological substrates, 4-PN and 4-NCA. The chain is 4-nitrophenol 4-monooxygenase/4-nitrocatechol 2-monooxygenase, reductase component (npcB) from Rhodococcus opacus (Nocardia opaca).